The following is an 873-amino-acid chain: DNA helicase/primase complex-associated protein (873 aa).

Positions 394–422 are disordered; sequence PPLPRDDGDGENNVVEVSSSTGGAHPPSD.

It belongs to the herpesviridae HEPA family. As to quaternary structure, associates with the primase and the helicase to form the helicase-primase complex. Interacts with the origin-binding protein. Interacts with the polymerase catalytic subunit.

It is found in the host nucleus. Functionally, component of the helicase/primase complex. Unwinds the DNA at the replication forks and generates single-stranded DNA for both leading and lagging strand synthesis. The primase synthesizes short RNA primers on the lagging strand that the polymerase presumably elongates using dNTPs. The primase-associated factor has no known catalytic activity in the complex and may serve to facilitate the formation of the replisome by directly interacting with the origin-binding protein and the polymerase. The protein is DNA helicase/primase complex-associated protein (UL102) of Homo sapiens (Human).